A 201-amino-acid chain; its full sequence is Potassium-transporting ATPase KdpC subunit (201 aa).

The chain crosses the membrane as a helical span at residues 17-37 (LLTGLAYPLAMTGLAGILFPV).

Belongs to the KdpC family. As to quaternary structure, the system is composed of three essential subunits: KdpA, KdpB and KdpC.

It localises to the cell inner membrane. Its function is as follows. Part of the high-affinity ATP-driven potassium transport (or Kdp) system, which catalyzes the hydrolysis of ATP coupled with the electrogenic transport of potassium into the cytoplasm. This subunit acts as a catalytic chaperone that increases the ATP-binding affinity of the ATP-hydrolyzing subunit KdpB by the formation of a transient KdpB/KdpC/ATP ternary complex. The sequence is that of Potassium-transporting ATPase KdpC subunit from Methylobacterium nodulans (strain LMG 21967 / CNCM I-2342 / ORS 2060).